The primary structure comprises 225 residues: Ribose-5-phosphate isomerase A (225 aa).

Substrate contacts are provided by residues 32 to 35, 85 to 88, and 98 to 101; these read TGST, DGAD, and KGGG. Glu107 (proton acceptor) is an active-site residue. Substrate is bound at residue Lys125.

It belongs to the ribose 5-phosphate isomerase family. As to quaternary structure, homodimer.

The enzyme catalyses aldehydo-D-ribose 5-phosphate = D-ribulose 5-phosphate. It participates in carbohydrate degradation; pentose phosphate pathway; D-ribose 5-phosphate from D-ribulose 5-phosphate (non-oxidative stage): step 1/1. Catalyzes the reversible conversion of ribose-5-phosphate to ribulose 5-phosphate. The protein is Ribose-5-phosphate isomerase A of Hahella chejuensis (strain KCTC 2396).